A 133-amino-acid chain; its full sequence is Small ribosomal subunit protein uS11 (133 aa).

It belongs to the universal ribosomal protein uS11 family. Part of the 30S ribosomal subunit. Interacts with proteins S7 and S18. Binds to IF-3.

Located on the platform of the 30S subunit, it bridges several disparate RNA helices of the 16S rRNA. Forms part of the Shine-Dalgarno cleft in the 70S ribosome. This chain is Small ribosomal subunit protein uS11, found in Burkholderia pseudomallei (strain 1106a).